A 275-amino-acid chain; its full sequence is Release factor glutamine methyltransferase (275 aa).

Residues G114–G118, D137, W165, and N180 each bind S-adenosyl-L-methionine. Position 180–183 (N180–Y183) interacts with substrate.

The protein belongs to the protein N5-glutamine methyltransferase family. PrmC subfamily.

The enzyme catalyses L-glutaminyl-[peptide chain release factor] + S-adenosyl-L-methionine = N(5)-methyl-L-glutaminyl-[peptide chain release factor] + S-adenosyl-L-homocysteine + H(+). Its function is as follows. Methylates the class 1 translation termination release factors RF1/PrfA and RF2/PrfB on the glutamine residue of the universally conserved GGQ motif. The polypeptide is Release factor glutamine methyltransferase (Xylella fastidiosa (strain Temecula1 / ATCC 700964)).